Consider the following 202-residue polypeptide: Inosine triphosphate pyrophosphatase (202 aa).

Residue 8–13 (TGNANK) participates in ITP binding. Glu55 is a binding site for Mg(2+). Residues Lys67, 83–84 (DT), Lys100, 159–162 (FGWD), Lys182, and 187–188 (HR) contribute to the ITP site.

The protein belongs to the HAM1 NTPase family. As to quaternary structure, homodimer. The cofactor is Mg(2+). It depends on Mn(2+) as a cofactor.

The protein localises to the cytoplasm. It is found in the nucleus. The catalysed reaction is ITP + H2O = IMP + diphosphate + H(+). The enzyme catalyses dITP + H2O = dIMP + diphosphate + H(+). It catalyses the reaction XTP + H2O = XMP + diphosphate + H(+). Pyrophosphatase that hydrolyzes non-canonical purine nucleotides such as inosine triphosphate (ITP), deoxyinosine triphosphate (dITP) or xanthosine 5'-triphosphate (XTP) to their respective monophosphate derivatives. The enzyme does not distinguish between the deoxy- and ribose forms. Probably excludes non-canonical purines from RNA and DNA precursor pools, thus preventing their incorporation into RNA and DNA and avoiding chromosomal lesions. The polypeptide is Inosine triphosphate pyrophosphatase (Candida albicans (strain SC5314 / ATCC MYA-2876) (Yeast)).